We begin with the raw amino-acid sequence, 276 residues long: MATRKLKPTSPGRRFQTISTFEEITKSTPEKSLTKGLTKKAGRNNNGRVTSRRRGGGVKRLYRIIDFKRNKVEVPATVASIEYDPNRSARIALLHYADGEKRYILCPVGLNKGDKILAGEKADIKPGNALLLKNIPVGTIVHNIELYPGKGGQFCRAAGTYAQLIAKEGKYALLRMPSGEVRKVLATCCATVGQVGNIHHENITLGKAGRNRWLGRRPKVRGVAMNPIDHPLGGGEGRSSGGRHPVSPWGMPAKGYKTRSKKKPSSKLIVKRRGQR.

Disordered stretches follow at residues 29–54 and 224–276; these read PEKS…SRRR and AMNP…RGQR. A compositionally biased stretch (basic residues) spans 256 to 276; the sequence is YKTRSKKKPSSKLIVKRRGQR.

This sequence belongs to the universal ribosomal protein uL2 family. Part of the 50S ribosomal subunit. Forms a bridge to the 30S subunit in the 70S ribosome.

In terms of biological role, one of the primary rRNA binding proteins. Required for association of the 30S and 50S subunits to form the 70S ribosome, for tRNA binding and peptide bond formation. It has been suggested to have peptidyltransferase activity; this is somewhat controversial. Makes several contacts with the 16S rRNA in the 70S ribosome. This Maridesulfovibrio salexigens (strain ATCC 14822 / DSM 2638 / NCIMB 8403 / VKM B-1763) (Desulfovibrio salexigens) protein is Large ribosomal subunit protein uL2.